The primary structure comprises 303 residues: THAP domain-containing protein 11 (303 aa).

The THAP-type zinc-finger motif lies at 6–64 (CCVPGCYNNSHRDKALHFYTFPKDAELRRLWLKNVSRAGVSGCFSTFQPTTGHRLCSVH). Disordered regions lie at residues 85–132 (VNER…AQTT) and 155–174 (SSQA…GEDV). Low complexity predominate over residues 93–132 (RPAGAAAARRRQQQQQQQQQQQQQQQQQQPSPSASTAQTT). An HCFC1-binding motif (HBM) motif is present at residues 232 to 235 (DHSY). A coiled-coil region spans residues 244–294 (EELLRKLNEQRDILALMEVKMKEMKGSIRHLRLTEAKLREELREKDRLLAM).

It belongs to the THAP11 family. In terms of assembly, forms homodimers. Interacts via HBM with HCFC1. Forms a complex with HCFC1 and ZNF143.

It localises to the nucleus. Its subcellular location is the cytoplasm. Transcription factor, which has both transcriptional activation and repression activities. Also modulates chromatin accessibility. In complex with HCFC1 and ZNF143, regulates the expression of several genes, including AP2S1, ESCO2, OPHN1, RBL1, UBXN8 and ZNF32. May regulate the expression of genes that encode both cytoplasmic and mitochondrial ribosomal proteins. Required for normal mitochondrial development and function. Regulates mitochondrial gene expression, including that of components of the electron transport chain. Involved in the maintainance of pluripotency in early embryonic cells, possibly through its action on mitochondrial maturation which is required to meet high energy demands of these cells. Required for early development of retina, preventing premature exit of retinal progenitor cells from the cell cycle. This effect may also be mediated by its action on mitochondria. Through the regulation of MMACHC gene expression, controls cobalamin metabolism. Required for normal brain development and neural precursor differentiation. Involved in cell growth. This chain is THAP domain-containing protein 11 (THAP11), found in Bos taurus (Bovine).